Here is a 376-residue protein sequence, read N- to C-terminus: tRNA-specific 2-thiouridylase MnmA (376 aa).

ATP is bound by residues 14 to 21 (GMSGGVDS) and Met40. Residues 100 to 102 (NPD) form an interaction with target base in tRNA region. The active-site Nucleophile is the Cys105. The cysteines at positions 105 and 202 are disulfide-linked. Gly129 contributes to the ATP binding site. Residues 152–154 (KDQ) are interaction with tRNA. Cys202 functions as the Cysteine persulfide intermediate in the catalytic mechanism. Residues 315-316 (RY) are interaction with tRNA.

It belongs to the MnmA/TRMU family.

It is found in the cytoplasm. It catalyses the reaction S-sulfanyl-L-cysteinyl-[protein] + uridine(34) in tRNA + AH2 + ATP = 2-thiouridine(34) in tRNA + L-cysteinyl-[protein] + A + AMP + diphosphate + H(+). In terms of biological role, catalyzes the 2-thiolation of uridine at the wobble position (U34) of tRNA, leading to the formation of s(2)U34. The protein is tRNA-specific 2-thiouridylase MnmA of Lactococcus lactis subsp. cremoris (strain MG1363).